Consider the following 102-residue polypeptide: NADH-quinone oxidoreductase subunit K (102 aa).

3 helical membrane-spanning segments follow: residues Met-6–Val-26, Ile-30–Val-50, and Ile-62–Leu-82.

Belongs to the complex I subunit 4L family. As to quaternary structure, NDH-1 is composed of 13 different subunits. Subunits NuoA, H, J, K, L, M, N constitute the membrane sector of the complex.

The protein resides in the cell inner membrane. It catalyses the reaction a quinone + NADH + 5 H(+)(in) = a quinol + NAD(+) + 4 H(+)(out). NDH-1 shuttles electrons from NADH, via FMN and iron-sulfur (Fe-S) centers, to quinones in the respiratory chain. The immediate electron acceptor for the enzyme in this species is believed to be ubiquinone. Couples the redox reaction to proton translocation (for every two electrons transferred, four hydrogen ions are translocated across the cytoplasmic membrane), and thus conserves the redox energy in a proton gradient. This chain is NADH-quinone oxidoreductase subunit K, found in Azotobacter vinelandii (strain DJ / ATCC BAA-1303).